The primary structure comprises 180 residues: Signal peptidase complex subunit 2 (180 aa).

The Cytoplasmic portion of the chain corresponds to 1–45; that stretch reads MSDERITVVNKWDGPTVKNGLDEVVKKILNDKVGWTEQHNLMNLR. A helical membrane pass occupies residues 46 to 66; the sequence is LLISFIGVAFSAFACGYDFYA. Residues 67-72 are Lumenal-facing; sequence PFPKSK. The helical transmembrane segment at 73–93 threads the bilayer; sequence IVLLVCSVSYFICMGVLQLFQ. The Cytoplasmic portion of the chain corresponds to 94–180; that stretch reads WYVEKDCFYE…LWARLIRSEQ (87 aa).

This sequence belongs to the SPCS2 family. In terms of assembly, component of the signal peptidase complex (SPC) composed of a catalytic subunit sec-11 and three accessory subunits spcs-1, spcs-2 and spcs-3. The complex induces a local thinning of the ER membrane which is used to measure the length of the signal peptide (SP) h-region of protein substrates. This ensures the selectivity of the complex towards h-regions shorter than 18-20 amino acids.

The protein resides in the endoplasmic reticulum membrane. Its function is as follows. Component of the signal peptidase complex (SPC) which catalyzes the cleavage of N-terminal signal sequences from nascent proteins as they are translocated into the lumen of the endoplasmic reticulum. Enhances the enzymatic activity of SPC and facilitates the interactions between different components of the translocation site. The sequence is that of Signal peptidase complex subunit 2 from Caenorhabditis briggsae.